Here is a 347-residue protein sequence, read N- to C-terminus: NADH-ubiquinone oxidoreductase chain 2 (347 aa).

11 consecutive transmembrane segments (helical) span residues 5–22 (ILIT…IVLF), 26–45 (WFMI…PILM), 60–80 (FLTQ…NLLC), 96–116 (TMIT…FWVP), 122–142 (ISLS…LSIL), 153–173 (LLLM…LNQT), 178–198 (ILAY…VYNP), 200–220 (LAIL…MLFM), 237–257 (FPLM…LPPL), 274–294 (DMII…YFYT), and 325–345 (LLAP…MLAA).

It belongs to the complex I subunit 2 family. As to quaternary structure, core subunit of respiratory chain NADH dehydrogenase (Complex I) which is composed of 45 different subunits. Interacts with TMEM242.

The protein localises to the mitochondrion inner membrane. It carries out the reaction a ubiquinone + NADH + 5 H(+)(in) = a ubiquinol + NAD(+) + 4 H(+)(out). Its function is as follows. Core subunit of the mitochondrial membrane respiratory chain NADH dehydrogenase (Complex I) which catalyzes electron transfer from NADH through the respiratory chain, using ubiquinone as an electron acceptor. Essential for the catalytic activity and assembly of complex I. The protein is NADH-ubiquinone oxidoreductase chain 2 of Ailuropoda melanoleuca (Giant panda).